The chain runs to 383 residues: Na(+)/H(+) antiporter NhaA (383 aa).

The next 11 helical transmembrane spans lie at 10-30 (LIGG…NNSP), 56-76 (LMHW…GLEI), 91-111 (IITP…IYLS), 121-141 (GWAI…ALLG), 150-170 (LLVI…IAIF), 174-194 (SLSL…IICN), 206-226 (VVLG…ATLA), 254-274 (PWII…ISFS), 289-308 (IIWG…LAVF), 327-347 (GISL…VLAF), and 355-375 (AIKI…YIVL).

This sequence belongs to the NhaA Na(+)/H(+) (TC 2.A.33) antiporter family.

It localises to the cell inner membrane. It catalyses the reaction Na(+)(in) + 2 H(+)(out) = Na(+)(out) + 2 H(+)(in). Functionally, na(+)/H(+) antiporter that extrudes sodium in exchange for external protons. This Francisella tularensis subsp. tularensis (strain SCHU S4 / Schu 4) protein is Na(+)/H(+) antiporter NhaA.